We begin with the raw amino-acid sequence, 1653 residues long: MATDGASCEPDASRAPEEAAGATAEAARKEFDVDTLSKSELRMLLSVMEGELEARDLVIEALRARRKEVFIQERYGRFNLNDPFLALQRDYEAGAGDKEKKPVCTNPLSILEAVMAHCRKMQERMSTQLAAAESRQKKLEMEKLQLQALEQEHKKLAARLEEERGKNKQVVLMLVKECKQLSGKVIEEAQKLEEVMAKLEEEKKKTNELEEELSAEKRRSTEMEAQMEKQLSEFDTEREQLRAKLNREEAHTTDLKEEIDKMKKMIEQLKRGSDSKPSLSLPRKTKDRRSVSISVGTEGPLTRSVACQTDLAVESTEHVKKSPLTVPVKPSPGSAKGSVGANAALVRPGIDRQASHGDLIGASLPTVPPASANRIEENGPSTGSPPDLTSSAAQSPAAAPHGLPPAHGSQSGSQSPCASAPPHSAPPHPGLNPRVQAARFRFQGNANDPDQNGNTTQSPPSRDVSPTSRDNLVAKQLARNTVTQALSRFTSPPVGAAPRPGASPTGDVGAHPPVGRTSLKTPGVARVDRGNPPPIPPKKPGLSQTPSPPHPQLKVIMDSSRASNAGAKVDNKTVASSPPSSLPQGNRVISEENLPKSSSPQLPPKPSIDLTVAPAGCAVSALATSQVGAWPAETPGLNQPACSGSSLVIPTTTAFRSSINPVSASSCRPGASDSLLVTASGWSPSLTPLLMSGGPAPLAGRPTLLQQAAAQGNVTLLSMLLNEEGLDINYSCEDGHSALYSAAKNGHTDCVRLLLNAEAQVNAADKNGFTPLCAAAAQGHFECVELLIAYDAHINHAADGGQTPLYLACKNGNKECIKLLLEAGTDRSVKTRDGWTPVHAAVDTGNVDSLKLLMYHGAPAHGNSLNEEEPESDASDLDEGEESSEGKSKPVVPADLINHADREGWTAAHIAASKGFKNCLEILCRHRGLEPERRDKCNRTVHDVATDDCKHLLENLNALKIPLRISVGEIQPGNYGSNDFECENTICALHIRKQTSWDDFSKAVSQALTNHFQAISSDGWWSLEDTAFNNTADSDIGLSTSSVRAIMLGSVPWSAGQSLAQSPWDFMRKTKAEQVTVLLSGPQEGCLSSVTYTSMIPLQMLQNYLRLVEQYHNVIFHGPEGSLQDYIVHQLALCLKHRQMAAGFSCEIVSAEVDAGFSKEQLVDLFISSACLIPVKQSPVKKKIIIILENLEKSSLSELLGDFLAPLEIRSTESPCTFQKGNGLSECYYFHENCFLMGTIAKACLQGPDLLVQQHFRWVQLRWDGEPMQGLLQRFLRRKLVNKFRGQMPSPCDPVCKTIAWALSVWRQLNSCLARLGTPEALLGPKYFLPCPVVPGHAQATVKWMSKLWNAVIAPRVQEAILSRASVKRQPGFGQTTTKKHPSQGQQAVVKAALSILLNKAVLHGCPLPRAELDQHTADFKGGSFPLSLVSNYNSCSKKKESGAWRKVNTSPRRKSGRFSSPTWNKPDLSNEGIKNKTISQLNCNKNASLSKQKSLENDLSLMLNLDQSLSLGSDDEADLVRELQSMCSSKSESDISKIADSRDDLRTFDSSGNNPAFSATANNPRMPVSQKEVSPLSSHQTTECSNNKSKTEPGVSRVKSFLPVPRSKVTQCSQNTKRSSSSSNTRQIEINNNSKEENWNLHKNEHIEKLNK.

Disordered regions lie at residues 1-27, 203-222, 268-297, 314-339, and 356-609; these read MATD…AEAA, KKKT…RSTE, QLKR…SVGT, ESTE…KGSV, and HGDL…PSID. Residues 119-276 adopt a coiled-coil conformation; sequence RKMQERMSTQ…EQLKRGSDSK (158 aa). Residues 379–389 are compositionally biased toward polar residues; the sequence is GPSTGSPPDLT. Low complexity predominate over residues 390-408; sequence SSAAQSPAAAPHGLPPAHG. Polar residues-rich tracts occupy residues 444 to 470, 478 to 490, and 573 to 584; these read GNAN…TSRD, ARNT…SRFT, and TVASSPPSSLPQ. Asymmetric dimethylarginine is present on arginine 488. 5 ANK repeats span residues 700 to 730, 734 to 763, 767 to 796, 800 to 829, and 833 to 862; these read GRPT…DINY, DGHS…QVNA, NGFT…HINH, GGQT…DRSV, and DGWT…PAHG. A disordered region spans residues 860-892; it reads AHGNSLNEEEPESDASDLDEGEESSEGKSKPVV. Acidic residues predominate over residues 866–883; that stretch reads NEEEPESDASDLDEGEES. The ANK 6 repeat unit spans residues 903–933; that stretch reads EGWTAAHIAASKGFKNCLEILCRHRGLEPER. Residues 1441–1472 form a disordered region; it reads ESGAWRKVNTSPRRKSGRFSSPTWNKPDLSNE. At serine 1514 the chain carries Phosphoserine. Positions 1545 to 1653 are disordered; it reads DLRTFDSSGN…KNEHIEKLNK (109 aa). Composition is skewed to polar residues over residues 1549–1564 and 1572–1589; these read FDSS…TANN and KEVS…SNNK. Positions 1614 to 1628 are enriched in low complexity; that stretch reads SQNTKRSSSSSNTRQ. The segment covering 1635–1653 has biased composition (basic and acidic residues); the sequence is SKEENWNLHKNEHIEKLNK.

In terms of assembly, interacts with CTTN/cortactin SH3 domain. Interacts with STRN, STRN4/zinedin and MOB4/phocein; this interactions mediate the association with the STRIPAK core complex and may regulate dendritic spine distribution of the STRIPAK complex in hippocampal neurons. Activation of glutamate receptors weakens the interaction with STRN and STRN4.

It localises to the cytoplasm. The protein localises to the cell cortex. It is found in the cell projection. Its subcellular location is the dendritic spine. Functionally, regulates the dendritic spine distribution of CTTN/cortactin in hippocampal neurons, and thus controls dendritic spinogenesis and dendritic spine maintenance. Associates with the striatin-interacting phosphatase and kinase (STRIPAK) core complex to regulate dendritic spine distribution of the STRIPAK complex in hippocampal neurons. The protein is Cortactin-binding protein 2 (CTTNBP2) of Eulemur macaco macaco (Black lemur).